The primary structure comprises 392 residues: Stilbene synthase 3 (392 aa).

Residue 55 to 58 (KFNR) participates in substrate binding. Residue C164 is part of the active site. Substrate contacts are provided by residues L267 and 305–307 (GGP).

The protein belongs to the thiolase-like superfamily. Chalcone/stilbene synthases family. In terms of assembly, homodimer.

The protein localises to the cytoplasm. It carries out the reaction 4-coumaroyl-CoA + 3 malonyl-CoA + 3 H(+) = trans-resveratrol + 4 CO2 + 4 CoA. It functions in the pathway phytoalexin biosynthesis; 3,4',5-trihydroxystilbene biosynthesis; 3,4',5-trihydroxystilbene from trans-4-coumarate: step 2/2. Its function is as follows. Mediates resistance to pathogens which are sensitive to stilbenes. This is Stilbene synthase 3 from Vitis vinifera (Grape).